Here is a 590-residue protein sequence, read N- to C-terminus: Negative elongation factor D (590 aa).

Residues 15-43 (FGSAAEWGDEADGGQQEDDYGEGEDDAEV) form a disordered region. A compositionally biased stretch (acidic residues) spans 21–43 (WGDEADGGQQEDDYGEGEDDAEV).

It belongs to the NELF-D family. The NELF complex is composed of NELFA, NELFB, NELFCD and NELFE; NELFA and NELFCD form a stable subcomplex that binds primarily through NELFCD to the N-terminus of NELFB. Binds RNA which may help to stabilize the NELF complex on nucleic acid. In vitro, the NELFA:NELFCD subcomplex binds to ssDNA and ssRNA in a sequence- and structure-dependent manner. Interacts with ARAF1. Interacts with PCF11. Interacts with NELFB. Interacts with KAT8.

The protein localises to the nucleus. Functionally, essential component of the NELF complex, a complex that negatively regulates the elongation of transcription by RNA polymerase II. The NELF complex, which acts via an association with the DSIF complex and causes transcriptional pausing, is counteracted by the P-TEFb kinase complex. This chain is Negative elongation factor D (NELFCD), found in Sus scrofa (Pig).